The chain runs to 448 residues: uncharacterized protein (448 aa).

The Extracellular portion of the chain corresponds to 1 to 50 (MAPEIFVKFKCASRDIKLLWASVFLRLLSYGLTNQVLTLFLNAINMTEDK). A helical membrane pass occupies residues 51-71 (IGLFMSLTLAGDVICSYILTW). Residues 72-93 (YADSWGRRRVLVYGCAMMLLSG) lie on the Cytoplasmic side of the membrane. Residues 94-114 (LVFSFSENFTLLLVFAIFGVI) traverse the membrane as a helical segment. Over 115 to 146 (SPSSDEVGPFKSIEEAMIAHLSPHNARPEIYA) the chain is Extracellular. A helical membrane pass occupies residues 147–167 (IHALVGTIGSALGAIICGIFV). The Cytoplasmic segment spans residues 168–184 (DLLKRTGLAATDLQCYK). A helical membrane pass occupies residues 185-205 (LVFLLYAFFAFCKMVIMLLLS). Residues 206 to 260 (DATELDGHYEHTDCNEETAEPLDVNDETAPLMRQATHPEERSNKLSKETVSVLMK) are Extracellular-facing. The helical transmembrane segment at 261 to 281 (LLVIFMVDSLGSGFMTSGWMV) threads the bilayer. Residues 282–287 (YYYSKQ) lie on the Cytoplasmic side of the membrane. The chain crosses the membrane as a helical span at residues 288–308 (FLMGSLALGTLFFITQLVMAS). Residues 309-333 (STIPSSIIARCFGPVRATLLVQIPS) lie on the Extracellular side of the membrane. Residues 334 to 354 (GIFSILIPMAKNYLPLSILFL) form a helical membrane-spanning segment. Topologically, residues 355-386 (NLHFATTAMDVTPRQILLTNIIKPRDLTKVMG) are cytoplasmic. Residue 386-393 (GVVNIGKT) coordinates ATP. A helical membrane pass occupies residues 387 to 407 (VVNIGKTFARCVGPIFTGILA). The Extracellular portion of the chain corresponds to 408–416 (NNNYLWLCY). A helical membrane pass occupies residues 417-437 (IISGSLVITADLILACMFLGV). Over 438–448 (DAKIKKQMNRH) the chain is Cytoplasmic.

It is found in the membrane. This is an uncharacterized protein from Saccharomyces cerevisiae (strain ATCC 204508 / S288c) (Baker's yeast).